A 187-amino-acid chain; its full sequence is Large ribosomal subunit protein eL18x (187 aa).

The interval 150-187 (HFGPAPGVPHSNTKPYVRHKGRKFEKARGKRKSRGFKV) is disordered. Residues 165–187 (YVRHKGRKFEKARGKRKSRGFKV) show a composition bias toward basic residues.

Belongs to the eukaryotic ribosomal protein eL18 family.

This chain is Large ribosomal subunit protein eL18x (RPL18C), found in Arabidopsis thaliana (Mouse-ear cress).